Here is a 213-residue protein sequence, read N- to C-terminus: Charged multivesicular body protein 2b (213 aa).

N-acetylalanine is present on A2. Residues 25–55 (QRAIIRDRAALEKQEKQLELEIKKMAKIGNK) are a coiled coil. The segment covering 179–194 (AKAPSAARSLPSASTS) has biased composition (low complexity). The interval 179 to 199 (AKAPSAARSLPSASTSKATIS) is disordered. S199 carries the post-translational modification Phosphoserine. The short motif at 201 to 211 (EEIERQLKALG) is the MIT-interacting motif element.

It belongs to the SNF7 family. Probable core component of the endosomal sorting required for transport complex III (ESCRT-III). ESCRT-III components are thought to multimerize to form a flat lattice on the perimeter membrane of the endosome. Several assembly forms of ESCRT-III may exist that interact and act sequentially. Interacts with CHMP2A. Interacts with VPS4A. Interacts with VPS4B; the interaction is direct. As to expression, widely expressed. Expressed in brain, heart, skeletal muscle, spleen, kidney, liver, small intestine, pancreas, lung, placenta and leukocytes. In brain, it is expressed in cerebellum, cerebral cortex, medulla, spinal cord, occipital lobe, frontal lobe, temporal lobe and putamen.

Its subcellular location is the cytoplasm. It localises to the cytosol. The protein localises to the late endosome membrane. Probable core component of the endosomal sorting required for transport complex III (ESCRT-III) which is involved in multivesicular bodies (MVBs) formation and sorting of endosomal cargo proteins into MVBs. MVBs contain intraluminal vesicles (ILVs) that are generated by invagination and scission from the limiting membrane of the endosome and mostly are delivered to lysosomes enabling degradation of membrane proteins, such as stimulated growth factor receptors, lysosomal enzymes and lipids. The MVB pathway appears to require the sequential function of ESCRT-O, -I,-II and -III complexes. ESCRT-III proteins mostly dissociate from the invaginating membrane before the ILV is released. The ESCRT machinery also functions in topologically equivalent membrane fission events, such as the terminal stages of cytokinesis and the budding of enveloped viruses (HIV-1 and other lentiviruses). ESCRT-III proteins are believed to mediate the necessary vesicle extrusion and/or membrane fission activities, possibly in conjunction with the AAA ATPase VPS4. The protein is Charged multivesicular body protein 2b (CHMP2B) of Homo sapiens (Human).